The following is a 152-amino-acid chain: MSTPARRRLMRDFKRLQEDPPAGVSGAPSENNIMVWNAVIFGPEGTPFEDGTFKLTIEFTEEYPNKPPTVRFVSKMFHPNVYADGSICLDILQNRWSPTYDVSSILTSIQSLLDEPNPNSPANSQAAQLYQENKREYEKRVSAIVEQSWRDC.

A UBC core domain is found at 4–150 (PARRRLMRDF…VSAIVEQSWR (147 aa)). The active-site Glycyl thioester intermediate is the Cys88. Ser120 is subject to Phosphoserine; by CDK9.

This sequence belongs to the ubiquitin-conjugating enzyme family. In terms of assembly, interacts with RAD18 and WAC. Interacts with RFPL4A and CCNB1. Post-translationally, phosphorylation at Ser-120 by CDK9 increases activity towards histone H2B.

The protein localises to the late endosome. Its subcellular location is the lysosome. The catalysed reaction is S-ubiquitinyl-[E1 ubiquitin-activating enzyme]-L-cysteine + [E2 ubiquitin-conjugating enzyme]-L-cysteine = [E1 ubiquitin-activating enzyme]-L-cysteine + S-ubiquitinyl-[E2 ubiquitin-conjugating enzyme]-L-cysteine.. The protein operates within protein modification; protein ubiquitination. In terms of biological role, E2 ubiquitin-conjugating enzyme that accepts ubiquitin from the ubiquitin-activating enzyme E1 and transfers it to a E3 ubiquitin-protein ligase. In vitro catalyzes 'Lys-11', as well as 'Lys-48'-linked polyubiquitination. Together with the E3 enzyme BRE1 (RNF20 and/or RNF40), plays a role in transcription regulation by catalyzing the monoubiquitination of histone H2B at 'Lys-120' to form H2BK120ub1. H2BK120ub1 gives a specific tag for epigenetic transcriptional activation, elongation by RNA polymerase II, telomeric silencing, and is also a prerequisite for H3K4me and H3K79me formation. Involved in mitophagy by acting as a E2 ubiquitin-conjugating enzyme for PRKN. In association with the E3 enzyme UBR4, is involved in N-end rule-dependent protein degradation. In association with the E3 ubiquitin-protein ligase complex SIFI, inhibits the mitochondrial stress response by acting as a E2 ubiquitin-conjugating enzyme for UBR4 and KCMF1. This chain is Ubiquitin-conjugating enzyme E2 A, found in Homo sapiens (Human).